A 142-amino-acid chain; its full sequence is Small ribosomal subunit protein uS12 (142 aa).

The segment at 1 to 30 is disordered; the sequence is MGKTHGMGAARKLKSHRRTQRWADKSYKKS. Basic residues predominate over residues 11–20; sequence RKLKSHRRTQ. Positions 21 to 30 are enriched in basic and acidic residues; sequence RWADKSYKKS. Proline 61 is subject to Hydroxyproline.

This sequence belongs to the universal ribosomal protein uS12 family.

The protein is Small ribosomal subunit protein uS12 (RPS23) of Euphorbia esula (Leafy spurge).